Consider the following 95-residue polypeptide: Secretoglobin family 1C member 1 (95 aa).

Residues 1–23 form the signal peptide; the sequence is MKGSSALLLVALSLLCVCGLTRA.

This sequence belongs to the secretoglobin family.

The protein resides in the secreted. In Mus musculus (Mouse), this protein is Secretoglobin family 1C member 1 (Scgb1c1).